A 247-amino-acid chain; its full sequence is Protein At-4/1 (247 aa).

Coiled-coil stretches lie at residues 39–126 (VESS…YKIR) and 182–247 (LLME…LSSS).

In terms of assembly, interacts with viral tomato spotted wilt virus (TSWV) movement protein NSM, which is involved in cell-to cell spread of viral genome and enlargement of the host plasmodesmata size exclusion limit (SEL). In terms of tissue distribution, expressed in leaves (at protein level).

The protein localises to the endoplasmic reticulum. It localises to the cell junction. It is found in the plasmodesma. Its function is as follows. Involved in intra- and inter-cellular trafficking through plasmodesmata (PD). In Arabidopsis thaliana (Mouse-ear cress), this protein is Protein At-4/1.